A 484-amino-acid polypeptide reads, in one-letter code: Ribosomal RNA small subunit methyltransferase F (484 aa).

Residues 126–132 (AAAPGSK), glutamate 150, aspartate 177, and aspartate 195 contribute to the S-adenosyl-L-methionine site. The active-site Nucleophile is cysteine 248.

The protein belongs to the class I-like SAM-binding methyltransferase superfamily. RsmB/NOP family.

It localises to the cytoplasm. It catalyses the reaction cytidine(1407) in 16S rRNA + S-adenosyl-L-methionine = 5-methylcytidine(1407) in 16S rRNA + S-adenosyl-L-homocysteine + H(+). In terms of biological role, specifically methylates the cytosine at position 1407 (m5C1407) of 16S rRNA. This Pectobacterium atrosepticum (strain SCRI 1043 / ATCC BAA-672) (Erwinia carotovora subsp. atroseptica) protein is Ribosomal RNA small subunit methyltransferase F.